The primary structure comprises 419 residues: DNA primase DnaG (419 aa).

The Toprim domain maps to 174–260 (DAIIVVEGRS…EVEDLEKDEV (87 aa)). Mg(2+)-binding residues include E180, D222, and D224. The disordered stretch occupies residues 277-314 (HNILSESDSKNSHKKHNGKHNNKHSNNKHQQHETKVKE). Over residues 288–305 (SHKKHNGKHNNKHSNNKH) the composition is skewed to basic residues.

This sequence belongs to the archaeal DnaG primase family. In terms of assembly, forms a ternary complex with MCM helicase and DNA. Component of the archaeal exosome complex. The cofactor is Mg(2+).

It carries out the reaction ssDNA + n NTP = ssDNA/pppN(pN)n-1 hybrid + (n-1) diphosphate.. RNA polymerase that catalyzes the synthesis of short RNA molecules used as primers for DNA polymerase during DNA replication. Also part of the exosome, which is a complex involved in RNA degradation. Acts as a poly(A)-binding protein that enhances the interaction between heteromeric, adenine-rich transcripts and the exosome. This is DNA primase DnaG from Methanobrevibacter smithii (strain ATCC 35061 / DSM 861 / OCM 144 / PS).